The primary structure comprises 400 residues: Spaetzle-processing enzyme (400 aa).

Positions 1–27 (MASTERNFLLLSLVVSALSGLVHRSDA) are cleaved as a signal peptide. The region spanning 34–94 (SCTPQQSDER…GLVNRILVCC (61 aa)) is the Clip domain. Intrachain disulfides connect Cys-35–Cys-93, Cys-46–Cys-77, Cys-52–Cys-94, Cys-127–Cys-269, Cys-166–Cys-182, and Cys-211–Cys-221. A Peptidase S1 domain is found at 135–399 (IFGGTNTTLW…FIDWIKQKLE (265 aa)). N-linked (GlcNAc...) asparagine glycosylation is present at Asn-140. His-181 functions as the Charge relay system in the catalytic mechanism. Ca(2+) is bound by residues Glu-202, Asp-204, Thr-207, and Asp-210. Asp-249 functions as the Charge relay system in the catalytic mechanism. A glycan (N-linked (GlcNAc...) asparagine) is linked at Asn-311. Cystine bridges form between Cys-315/Cys-332 and Cys-342/Cys-375. The Charge relay system role is filled by Ser-346.

This sequence belongs to the peptidase S1 family. CLIP subfamily. In terms of assembly, in the active form, heterodimer of a light chain and a heavy chain; disulfide-linked. In terms of processing, proteolytically cleaved in response to Gram-negative bacterial or fungal infection; processing is likely to result in its activation. Cleavage produces a light chain containing the CLIP domain and a catalytic heavy chain which remain covalently associated through an interchain disulfide bond.

Its subcellular location is the secreted. Its function is as follows. Endopeptidase which plays a key role in innate immunity by cleaving Tl ligand spz and thereby activating the Toll pathway in response to fungal and Gram-positive bacterial infections. Acts downstream of pathogen recognition receptors PGRP-SA and GNBP1 and protease grass in response to Gram-positive bacterial infection. Acts downstream of protease psh in response to fungal infection. This chain is Spaetzle-processing enzyme, found in Drosophila melanogaster (Fruit fly).